Consider the following 299-residue polypeptide: Non-homologous end joining protein Ku (299 aa).

A Ku domain is found at 10 to 188 (ISFGLVHIPV…TEAVTDARLT (179 aa)). Disordered regions lie at residues 227 to 249 (AGEGKIEDVETDPGEEERKSADV) and 261 to 299 (AGKSSASKTRKPAAKDKVADKQSPKPKRPAVRKKTGKAS). A compositionally biased stretch (basic and acidic residues) spans 273–283 (AAKDKVADKQS). Positions 284–299 (PKPKRPAVRKKTGKAS) are enriched in basic residues.

Belongs to the prokaryotic Ku family. As to quaternary structure, homodimer. Interacts with LigD.

Its function is as follows. With LigD forms a non-homologous end joining (NHEJ) DNA repair enzyme, which repairs dsDNA breaks with reduced fidelity. Binds linear dsDNA with 5'- and 3'- overhangs but not closed circular dsDNA nor ssDNA. Recruits and stimulates the ligase activity of LigD. The chain is Non-homologous end joining protein Ku from Pseudomonas syringae pv. tomato (strain ATCC BAA-871 / DC3000).